Consider the following 564-residue polypeptide: MAPKDIMTNSHAKSILNTMNSLRKSQTLCDVTLRVNLKDFPAHRIVLAACSDYFCAMFTNELSEKGKPYVDIQGLTSSTMEILLDFVYTETVHVTVENVQELLPAACLLQLKGVKQACCDFLESQLDPSNCLGIRDFAETHNCLELMQAAEVYSQKHFPEVVQHEEFMLLHQEEVEKLIHCDEIQINSEEPVFEAVINWVKHNRHEREKSLPQLLQYVRMPLLTPRYITDVIDAEPLIRCSLQCRDLVDEAKKFHLRPELRSQMQGPRTRVRLGANEVLLVIGGFGSQQSPIDIVEKYDPKTQEWSVLPSITRKRRYVATVSLGDRVYVIGGYDGRSRLSSVECLDYTSEEDGVWYSVAPMNVRRGLAGATTLGDMIYVSGGFDGSRRHTSMERYDPNIDQWSMLGDMQTAREGAGLVVANGVIYCLGGYDGLNILSSVERYDPHTGHWSHVTPMATKRSGAGVSLLNDHIYVVGGFDGTAHLSSVEAYNIRTDSWTTMTSMTTPRCYVGATVLRGRLYAIAGYDGNSLLNSVECYDPLIDSWAVVTSMATQRCDAGVCVLREK.

The BTB domain maps to 29–96; the sequence is CDVTLRVNLK…VYTETVHVTV (68 aa). The region spanning 131-232 is the BACK domain; that stretch reads CLGIRDFAET…LTPRYITDVI (102 aa). Kelch repeat units follow at residues 278 to 325, 327 to 375, 376 to 422, 423 to 469, 471 to 516, and 518 to 563; these read VLLV…SLGD, VYVI…TLGD, MIYV…VANG, VIYC…LLND, IYVV…VLRG, and LYAI…VLRE.

As to quaternary structure, component of the BCR(KLHL12) E3 ubiquitin ligase complex.

The protein localises to the cytoplasmic vesicle. The protein resides in the COPII-coated vesicle. The protein operates within protein modification; protein ubiquitination. In terms of biological role, substrate-specific adapter of a BCR (BTB-CUL3-RBX1) E3 ubiquitin ligase complex that acts as a negative regulator of Wnt signaling pathway and ER-Golgi transport. The BCR(KLHL12) complex is involved in ER-Golgi transport by regulating the size of COPII coats, thereby playing a key role in collagen export, which is required for embryonic stem (ES) cells division. This Xenopus laevis (African clawed frog) protein is Kelch-like protein 12 (klhl12).